We begin with the raw amino-acid sequence, 193 residues long: Achaete-scute homolog 2 (193 aa).

2 disordered regions span residues 1 to 58 (MDSR…RNER) and 128 to 177 (PLPR…GALS). The bHLH domain occupies 50 to 102 (AAVARRNERERNRVKLVNLGFQALRQHVPHGGASKKLSKVETLRSAVEYIRAL). The segment covering 128–152 (PLPRAPSGTPATAASPSCASSSPGR) has biased composition (low complexity).

Efficient DNA binding requires dimerization with another basic helix-loop-helix (bHLH) protein. Forms heterodimers with bHLH transcription factor TCF3. May not heterodimerise with bHLH protein HAND1. Expressed in placenta.

It is found in the nucleus. Transcription factor. Binds to E-box motifs 5'-CANNTG-3' in the regulatory elements of target genes, probably as a heterodimer with another basic helix-loop-helix (bHLH) protein such as the transcription factor TCF3. May bind both open and closed chromatin, acting as a pioneer transcription factor to allow other factors to bind and activate lineage-specific genes. Required during post-implantation development for the generation of some differentiated trophoblast cell types. Transcriptional activity of ASCL2 may be antagonised in a subset of trophoblast cells by bHLH transcription factor HAND1, perhaps by competing for dimerization with other bHLH proteins. Involved in differentiation and function of follicular T-helper (Tfh) cells, thereby playing a role in germinal center responses; probably modulates expression of genes involved in Tfh cell function, such as BCL6. May also act as a suppressor of Th1-, Th2- and Th17-cell differentiation. Induces the formation of stem cells in intestinal crypts in vitro, synergistically activating transcription of target genes, such as SOX9, together with TCF4/beta-catenin. May form a bistable transcriptional switch, controlling expression of its own gene together with Wnt/R-spondin signaling, and thereby maintaining stem cell characteristics. Modulates expression of target genes, including perhaps down-regulating EGR1/Krox24 and chemokine CXCL10/Mob-1 and up-regulating CXCR4 and CDKN1C/p57kip2, in Schwann cells. May play a role in reducing proliferation of Schwann cells, perhaps acting via modulation of expression of CDKN1C. May be dispensable for blastocyst formation and later embryonic function. May be involved in the determination of neuronal precursors. The polypeptide is Achaete-scute homolog 2 (ASCL2) (Bos taurus (Bovine)).